A 407-amino-acid polypeptide reads, in one-letter code: Putative cystathionine beta-lyase (407 aa).

Lys-237 is modified (N6-(pyridoxal phosphate)lysine).

It belongs to the class-II pyridoxal-phosphate-dependent aminotransferase family. MalY/PatB cystathionine beta-lyase subfamily. Pyridoxal 5'-phosphate is required as a cofactor.

It carries out the reaction L,L-cystathionine + H2O = L-homocysteine + pyruvate + NH4(+). The catalysed reaction is an S-substituted L-cysteine + H2O = a thiol + pyruvate + NH4(+). It functions in the pathway amino-acid biosynthesis; L-methionine biosynthesis via de novo pathway; L-homocysteine from L-cystathionine: step 1/1. This is Putative cystathionine beta-lyase from Mycobacterium tuberculosis (strain CDC 1551 / Oshkosh).